The sequence spans 313 residues: Synaptophysin (313 aa).

The Cytoplasmic portion of the chain corresponds to 1–25; it reads MLLLADMDVVNQLVAGGQFRVVKEP. Residues 21–227 form the MARVEL domain; the sequence is VVKEPLGFVK…NLWFVFKETG (207 aa). Residues 26–49 traverse the membrane as a helical segment; that stretch reads LGFVKVLQWVFAIFAFATCGSYSG. Residues 50–106 are Vesicular-facing; the sequence is ELQLSVDCANKTKSDLNIEVEFEYPFRLHEVYFEAPTCQGDPKKIFLVGNYSSSAEF. Asparagine 59 carries N-linked (GlcNAc...) asparagine glycosylation. Phosphotyrosine is present on tyrosine 81. A glycan (N-linked (GlcNAc...) asparagine) is linked at asparagine 99. The chain crosses the membrane as a helical span at residues 107-130; sequence FVTVAVFAFLYSMGALATYIFLQN. Residues 131-137 lie on the Cytoplasmic side of the membrane; sequence KYRENNK. A helical transmembrane segment spans residues 138–161; sequence GPMLDFLATAVFAFMWLVSSSAWA. Residues 162 to 199 lie on the Vesicular side of the membrane; that stretch reads KGLSDVKMATDPENIIKGMHVCHQPGNTCKELRDPVTS. A helical membrane pass occupies residues 200–223; it reads GLNTSVVFGFLNLVLWVGNLWFVF. The Cytoplasmic segment spans residues 224–313; that stretch reads KETGWAAPFL…GAPTSFSNQM (90 aa). Residues 238-313 are disordered; it reads GAPEKQPAPG…GAPTSFSNQM (76 aa). Gly residues predominate over residues 253 to 263; sequence AGYGQGPGGYG. The repeats, Gly/Tyr-rich stretch occupies residues 254–304; it reads GYGQGPGGYGPQDSYGPQGGYQPDYGQPASSGGGGYGPQGDYGQQGYGPQG. Low complexity predominate over residues 264 to 283; the sequence is PQDSYGPQGGYQPDYGQPAS. Over residues 284–302 the composition is skewed to gly residues; that stretch reads SGGGGYGPQGDYGQQGYGP.

Belongs to the synaptophysin/synaptobrevin family. In terms of assembly, homohexamer or homotetramer. Interacts with SRCIN1. Interacts with VAMP2; the interaction is inhibited by interaction of VAPM2 with SEPT8. Ubiquitinated; mediated by SIAH1 or SIAH2 and leading to its subsequent proteasomal degradation. In terms of processing, phosphorylated by SRC. Characteristic of a type of small (30-80 nm) neurosecretory vesicles, including presynaptic vesicles, but also vesicles of various neuroendocrine cells of both neuronal and epithelial phenotype.

It is found in the cytoplasmic vesicle. It localises to the secretory vesicle. The protein localises to the synaptic vesicle membrane. The protein resides in the synapse. Its subcellular location is the synaptosome. Possibly involved in structural functions as organizing other membrane components or in targeting the vesicles to the plasma membrane. Involved in the regulation of short-term and long-term synaptic plasticity. The sequence is that of Synaptophysin (SYP) from Bos taurus (Bovine).